Here is a 173-residue protein sequence, read N- to C-terminus: uncharacterized protein (173 aa).

Residues 49–72 (PTRSGRTSNSGNRGPVMTSTSSIN) are disordered.

This is an uncharacterized protein from Human adenovirus B serotype 7 (HAdV-7).